The chain runs to 352 residues: Phosphoribosylformylglycinamidine cyclo-ligase (352 aa).

Belongs to the AIR synthase family.

Its subcellular location is the cytoplasm. The catalysed reaction is 2-formamido-N(1)-(5-O-phospho-beta-D-ribosyl)acetamidine + ATP = 5-amino-1-(5-phospho-beta-D-ribosyl)imidazole + ADP + phosphate + H(+). It participates in purine metabolism; IMP biosynthesis via de novo pathway; 5-amino-1-(5-phospho-D-ribosyl)imidazole from N(2)-formyl-N(1)-(5-phospho-D-ribosyl)glycinamide: step 2/2. The chain is Phosphoribosylformylglycinamidine cyclo-ligase from Stenotrophomonas maltophilia (strain R551-3).